A 366-amino-acid chain; its full sequence is Anhydro-N-acetylmuramic acid kinase (366 aa).

12-19 (GTSLDGID) is a binding site for ATP.

This sequence belongs to the anhydro-N-acetylmuramic acid kinase family.

The enzyme catalyses 1,6-anhydro-N-acetyl-beta-muramate + ATP + H2O = N-acetyl-D-muramate 6-phosphate + ADP + H(+). It functions in the pathway amino-sugar metabolism; 1,6-anhydro-N-acetylmuramate degradation. The protein operates within cell wall biogenesis; peptidoglycan recycling. In terms of biological role, catalyzes the specific phosphorylation of 1,6-anhydro-N-acetylmuramic acid (anhMurNAc) with the simultaneous cleavage of the 1,6-anhydro ring, generating MurNAc-6-P. Is required for the utilization of anhMurNAc either imported from the medium or derived from its own cell wall murein, and thus plays a role in cell wall recycling. The sequence is that of Anhydro-N-acetylmuramic acid kinase from Nitrosospira multiformis (strain ATCC 25196 / NCIMB 11849 / C 71).